The chain runs to 138 residues: Larval cuticle protein 1 (138 aa).

An N-terminal signal peptide occupies residues 1-16 (MFKFVMVFAVLGVAAA). The 62-residue stretch at 49-110 (ADGFDADLLV…PVGAVLPTPP (62 aa)) folds into the Chitin-binding type R&amp;R domain.

Component of the larval cuticle. This chain is Larval cuticle protein 1 (Lcp1), found in Drosophila miranda (Fruit fly).